We begin with the raw amino-acid sequence, 463 residues long: Glycine--tRNA ligase (463 aa).

Arginine 102 provides a ligand contact to substrate. Positions 113–134 (KHGHPPPNGLADIRDPDTGEPG) are disordered. Glutamate 165 provides a ligand contact to substrate. ATP contacts are provided by residues 197 to 199 (RNE), 207 to 212 (FRTREF), 284 to 285 (EL), and 328 to 331 (GLTR). 212–216 (FEQME) serves as a coordination point for substrate. 324–328 (EPAAG) is a substrate binding site.

This sequence belongs to the class-II aminoacyl-tRNA synthetase family. Homodimer.

It localises to the cytoplasm. It catalyses the reaction tRNA(Gly) + glycine + ATP = glycyl-tRNA(Gly) + AMP + diphosphate. Its function is as follows. Catalyzes the attachment of glycine to tRNA(Gly). The polypeptide is Glycine--tRNA ligase (Mycolicibacterium paratuberculosis (strain ATCC BAA-968 / K-10) (Mycobacterium paratuberculosis)).